We begin with the raw amino-acid sequence, 110 residues long: U12-hexatoxin-Hi1a (110 aa).

Residues 1-18 (MRVALVFLVLSILAATHG) form the signal peptide. 3 cysteine pairs are disulfide-bonded: Cys72–Cys86, Cys79–Cys91, and Cys85–Cys104.

In terms of tissue distribution, expressed by the venom gland.

It localises to the secreted. Functionally, probable ion channel inhibitor. This Hadronyche infensa (Fraser island funnel-web spider) protein is U12-hexatoxin-Hi1a.